We begin with the raw amino-acid sequence, 356 residues long: Gluconolactonase (356 aa).

A signal peptide (tat-type signal) is located at residues 1–35 (MTTGRMSRRECLSAAVMVPIAAMTATATITGSAQA).

Homodimer. Post-translationally, predicted to be exported by the Tat system. The position of the signal peptide cleavage has been experimentally proven.

The protein localises to the periplasm. The enzyme catalyses D-glucono-1,5-lactone + H2O = D-gluconate + H(+). It participates in carbohydrate acid metabolism; D-gluconate biosynthesis; D-gluconate from D-glucono-1,5-lactone: step 1/1. Hydrolyzes the gluconolactone formed by glucose-fructose oxidoreductase, and that formed in aerobic conditions by the glucose dehydrogenase present. This chain is Gluconolactonase (gnl), found in Zymomonas mobilis subsp. mobilis (strain ATCC 31821 / ZM4 / CP4).